The chain runs to 773 residues: Polyribonucleotide nucleotidyltransferase (773 aa).

2 residues coordinate Mg(2+): Asp-490 and Asp-496. The KH domain maps to 557–616 (PKIDTITIPVDKIKVVIGKGGEQIDKIIAETGVKIDIDDEGLCSIFSSDQAAIDRAKEII). One can recognise an S1 motif domain in the interval 626–694 (GEIYDAKVVR…DKGRVDASMR (69 aa)). The span at 700 to 721 (PEGYVEPERKPRERRENGDRRK) shows a compositional bias: basic and acidic residues. Positions 700-773 (PEGYVEPERK…FPELSTKKPE (74 aa)) are disordered. The span at 739–748 (RNNQGNKVGN) shows a compositional bias: low complexity. Basic and acidic residues predominate over residues 751–773 (FELRERKSHIDEEFPELSTKKPE).

It belongs to the polyribonucleotide nucleotidyltransferase family. Requires Mg(2+) as cofactor.

The protein resides in the cytoplasm. The enzyme catalyses RNA(n+1) + phosphate = RNA(n) + a ribonucleoside 5'-diphosphate. In terms of biological role, involved in mRNA degradation. Catalyzes the phosphorolysis of single-stranded polyribonucleotides processively in the 3'- to 5'-direction. This Lactococcus lactis subsp. lactis (strain IL1403) (Streptococcus lactis) protein is Polyribonucleotide nucleotidyltransferase.